The following is a 295-amino-acid chain: Inositol polyphosphate multikinase IPK2 (295 aa).

Positions 1-21 (MASDLRPPEHQVAGHRASADK) are disordered.

Belongs to the inositol phosphokinase (IPK) family.

The catalysed reaction is 1D-myo-inositol 1,4,5-trisphosphate + 2 ATP = 1D-myo-inositol 1,3,4,5,6-pentakisphosphate + 2 ADP + 2 H(+). The enzyme catalyses 1D-myo-inositol 1,3,4,6-tetrakisphosphate + ATP = 1D-myo-inositol 1,3,4,5,6-pentakisphosphate + ADP + H(+). Its function is as follows. Inositol phosphate kinase with a broad substrate specificity. Phosphorylates inositol 1,4,5-trisphosphate (Ins(1,4,5)P3), inositol 1,4,5,6-tetrakisphosphate (Ins(1,4,5,6)P4), inositol 1,3,4,5-tetrakisphosphate (Ins(1,3,4,5)P4), inositol 1,3,4,6-tetrakisphosphate (Ins(1,3,4,6)P4) and inositol 1,2,3,4,6-pentakisphosphate (Ins(1,2,3,4,6)P5) but not inositol 1,4-bisphosphate (Ins(1,4)P2), inositol 1,3,4-trisphosphate (Ins(1,3,4)P3), inositol 1,2,6-trisphosphate (Ins(1,2,6)P3), inositol 3,4,5,6-tetrakisphosphate (Ins(3,4,5,6)P4), inositol 1,3,4,5,6-pentakisphosphate (Ins(1,3,4,5,6)P5), inositol 1,2,4,5,6-pentakisphosphate (Ins(1,2,4,5,6)P5) or inositol hexakisphosphate (InsP6). Regulates pollen and root development probably through the regulation of InsP3-mediated calcium accumulation. The chain is Inositol polyphosphate multikinase IPK2 from Oryza sativa subsp. indica (Rice).